The chain runs to 305 residues: Putative glutamine amidotransferase MTH_191 (305 aa).

The active site involves Cys2. The region spanning 2-305 (CGIAGVVYKD…SPGEVRVYEI (304 aa)) is the Glutamine amidotransferase type-2 domain.

This is Putative glutamine amidotransferase MTH_191 from Methanothermobacter thermautotrophicus (strain ATCC 29096 / DSM 1053 / JCM 10044 / NBRC 100330 / Delta H) (Methanobacterium thermoautotrophicum).